The following is a 415-amino-acid chain: Multidrug resistance protein MdtA (415 aa).

The signal sequence occupies residues 1 to 21 (MKGSYKSRWVIVIVVVIAAIA). Over residues 31–47 (DSQSAAPGATKQAQQSP) the composition is skewed to polar residues. Disordered stretches follow at residues 31-56 (DSQSAAPGATKQAQQSPAGGRRGMRA) and 390-415 (VVETQSATTPEEKATSREYAKKGARS). Residues 399 to 415 (PEEKATSREYAKKGARS) are compositionally biased toward basic and acidic residues.

Belongs to the membrane fusion protein (MFP) (TC 8.A.1) family. In terms of assembly, part of a tripartite efflux system composed of MdtA, MdtB and MdtC.

The protein localises to the cell inner membrane. In terms of biological role, the MdtABC tripartite complex confers resistance against novobiocin and deoxycholate. The protein is Multidrug resistance protein MdtA of Escherichia coli O6:H1 (strain CFT073 / ATCC 700928 / UPEC).